Consider the following 338-residue polypeptide: Methionine synthase (338 aa).

Zn(2+)-binding residues include H211, C213, and C294.

It belongs to the archaeal MetE family. Requires Zn(2+) as cofactor.

The protein operates within amino-acid biosynthesis; L-methionine biosynthesis via de novo pathway. Catalyzes the transfer of a methyl group to L-homocysteine resulting in methionine formation. The physiological methyl donor is unknown. The chain is Methionine synthase from Sulfurisphaera tokodaii (strain DSM 16993 / JCM 10545 / NBRC 100140 / 7) (Sulfolobus tokodaii).